The primary structure comprises 1343 residues: DNA-directed RNA polymerase subunit beta (1343 aa).

This sequence belongs to the RNA polymerase beta chain family. In terms of assembly, the RNAP catalytic core consists of 2 alpha, 1 beta, 1 beta' and 1 omega subunit. When a sigma factor is associated with the core the holoenzyme is formed, which can initiate transcription.

The catalysed reaction is RNA(n) + a ribonucleoside 5'-triphosphate = RNA(n+1) + diphosphate. Its function is as follows. DNA-dependent RNA polymerase catalyzes the transcription of DNA into RNA using the four ribonucleoside triphosphates as substrates. The polypeptide is DNA-directed RNA polymerase subunit beta (Shewanella sp. (strain W3-18-1)).